We begin with the raw amino-acid sequence, 67 residues long: Conotoxin Cp1.1 (67 aa).

The N-terminal stretch at 1 to 26 (MMFRLTSVSCFLLVIACLNLFQVVLT) is a signal peptide. 4 disulfides stabilise this stretch: Cys-29-Cys-43, Cys-36-Cys-48, Cys-42-Cys-52, and Cys-47-Cys-56. Position 60 is a tyrosine amide (Tyr-60). The propeptide occupies 64–67 (ATFQ).

This sequence belongs to the conotoxin I2 superfamily. In terms of tissue distribution, expressed by the venom duct.

The protein resides in the secreted. The protein is Conotoxin Cp1.1 of Conus capitaneus (Captain cone).